Reading from the N-terminus, the 380-residue chain is Chaperone protein DnaJ (380 aa).

The region spanning 5-72 is the J domain; sequence DYYDTLGVPK…QKRAAYDQYG (68 aa). Positions 21–47 are disordered; the sequence is IKKAYRKLAMKHHPDRNQGDTSKVSED. The segment covering 24–34 has biased composition (basic residues); the sequence is AYRKLAMKHHP. Residues 35–47 show a composition bias toward basic and acidic residues; the sequence is DRNQGDTSKVSED. The CR-type zinc-finger motif lies at 139–217; sequence GKEAQIRIPS…CHGVGKTKNN (79 aa). Cys152, Cys155, Cys169, Cys172, Cys191, Cys194, Cys205, and Cys208 together coordinate Zn(2+). CXXCXGXG motif repeat units follow at residues 152–159, 169–176, 191–198, and 205–212; these read CGICHGTG, CTTCHGHG, CPQCKGSG, and CVACHGVG.

It belongs to the DnaJ family. Homodimer. Zn(2+) is required as a cofactor.

Its subcellular location is the cytoplasm. Functionally, participates actively in the response to hyperosmotic and heat shock by preventing the aggregation of stress-denatured proteins and by disaggregating proteins, also in an autonomous, DnaK-independent fashion. Unfolded proteins bind initially to DnaJ; upon interaction with the DnaJ-bound protein, DnaK hydrolyzes its bound ATP, resulting in the formation of a stable complex. GrpE releases ADP from DnaK; ATP binding to DnaK triggers the release of the substrate protein, thus completing the reaction cycle. Several rounds of ATP-dependent interactions between DnaJ, DnaK and GrpE are required for fully efficient folding. Also involved, together with DnaK and GrpE, in the DNA replication of plasmids through activation of initiation proteins. The sequence is that of Chaperone protein DnaJ from Polaromonas naphthalenivorans (strain CJ2).